The following is a 255-amino-acid chain: 4-hydroxy-tetrahydrodipicolinate reductase (255 aa).

NAD(+)-binding positions include 9-14 (GFKGKM), D35, 89-91 (GTT), and 115-118 (APNF). H145 (proton donor/acceptor) is an active-site residue. H146 serves as a coordination point for (S)-2,3,4,5-tetrahydrodipicolinate. Residue K149 is the Proton donor of the active site. 155 to 156 (GT) is a binding site for (S)-2,3,4,5-tetrahydrodipicolinate.

It belongs to the DapB family.

The protein localises to the cytoplasm. The catalysed reaction is (S)-2,3,4,5-tetrahydrodipicolinate + NAD(+) + H2O = (2S,4S)-4-hydroxy-2,3,4,5-tetrahydrodipicolinate + NADH + H(+). It carries out the reaction (S)-2,3,4,5-tetrahydrodipicolinate + NADP(+) + H2O = (2S,4S)-4-hydroxy-2,3,4,5-tetrahydrodipicolinate + NADPH + H(+). It functions in the pathway amino-acid biosynthesis; L-lysine biosynthesis via DAP pathway; (S)-tetrahydrodipicolinate from L-aspartate: step 4/4. Catalyzes the conversion of 4-hydroxy-tetrahydrodipicolinate (HTPA) to tetrahydrodipicolinate. In Streptococcus pneumoniae (strain 70585), this protein is 4-hydroxy-tetrahydrodipicolinate reductase.